Reading from the N-terminus, the 188-residue chain is Large ribosomal subunit protein bL35m (188 aa).

It belongs to the bacterial ribosomal protein bL35 family. In terms of assembly, component of the mitochondrial large ribosomal subunit (mt-LSU). Mature mammalian 55S mitochondrial ribosomes consist of a small (28S) and a large (39S) subunit. The 28S small subunit contains a 12S ribosomal RNA (12S mt-rRNA) and 30 different proteins. The 39S large subunit contains a 16S rRNA (16S mt-rRNA), a copy of mitochondrial valine transfer RNA (mt-tRNA(Val)), which plays an integral structural role, and 52 different proteins.

The protein resides in the mitochondrion. In Homo sapiens (Human), this protein is Large ribosomal subunit protein bL35m (MRPL35).